Consider the following 254-residue polypeptide: Dihydroorotate dehydrogenase B (NAD(+)), electron transfer subunit (254 aa).

Residues 1-99 (MLQTEMKVIQ…LGPLGKGFDI (99 aa)) enclose the FAD-binding FR-type domain. Residues 50 to 53 (RPIS), 67 to 69 (LYR), and 74 to 75 (GT) contribute to the FAD site. [2Fe-2S] cluster is bound by residues cysteine 218, cysteine 223, cysteine 226, and cysteine 241.

Belongs to the PyrK family. As to quaternary structure, heterotetramer of 2 PyrK and 2 PyrD type B subunits. [2Fe-2S] cluster serves as cofactor. It depends on FAD as a cofactor.

The protein operates within pyrimidine metabolism; UMP biosynthesis via de novo pathway; orotate from (S)-dihydroorotate (NAD(+) route): step 1/1. Its function is as follows. Responsible for channeling the electrons from the oxidation of dihydroorotate from the FMN redox center in the PyrD type B subunit to the ultimate electron acceptor NAD(+). This is Dihydroorotate dehydrogenase B (NAD(+)), electron transfer subunit from Listeria monocytogenes serotype 4a (strain HCC23).